The primary structure comprises 430 residues: Enolase (430 aa).

Gln-167 is a binding site for (2R)-2-phosphoglycerate. Glu-209 acts as the Proton donor in catalysis. 3 residues coordinate Mg(2+): Asp-246, Glu-289, and Asp-316. 4 residues coordinate (2R)-2-phosphoglycerate: Lys-341, Arg-370, Ser-371, and Lys-392. The active-site Proton acceptor is the Lys-341.

The protein belongs to the enolase family. Component of the RNA degradosome, a multiprotein complex involved in RNA processing and mRNA degradation. It depends on Mg(2+) as a cofactor.

It is found in the cytoplasm. Its subcellular location is the secreted. The protein localises to the cell surface. It catalyses the reaction (2R)-2-phosphoglycerate = phosphoenolpyruvate + H2O. The protein operates within carbohydrate degradation; glycolysis; pyruvate from D-glyceraldehyde 3-phosphate: step 4/5. Its function is as follows. Catalyzes the reversible conversion of 2-phosphoglycerate (2-PG) into phosphoenolpyruvate (PEP). It is essential for the degradation of carbohydrates via glycolysis. In Alteromonas mediterranea (strain DSM 17117 / CIP 110805 / LMG 28347 / Deep ecotype), this protein is Enolase.